Reading from the N-terminus, the 121-residue chain is MCQNLGKFEIVVSHYRRVKAMNVIVDLCVVPLGVGVSVGQYVAACQKVLAEAGLKHTMHAYGTNIEGDWDEVFAAVKACHEAVHALGAPRITSSMRFGTRTDRPQTMDEKVKSVETWLENS.

Belongs to the UPF0045 family.

This chain is UPF0045 protein sll0230, found in Synechocystis sp. (strain ATCC 27184 / PCC 6803 / Kazusa).